We begin with the raw amino-acid sequence, 222 residues long: Large ribosomal subunit protein uL4 (222 aa).

Residues 42-100 (AAGRQGTHSTKTRGEVRGGGKKPYRQKGTGRARQGSVRAPQFTGGGTVHGPKPRDYAQR) form a disordered region. Basic residues predominate over residues 60-71 (GGKKPYRQKGTG).

It belongs to the universal ribosomal protein uL4 family. Part of the 50S ribosomal subunit.

One of the primary rRNA binding proteins, this protein initially binds near the 5'-end of the 23S rRNA. It is important during the early stages of 50S assembly. It makes multiple contacts with different domains of the 23S rRNA in the assembled 50S subunit and ribosome. In terms of biological role, forms part of the polypeptide exit tunnel. The polypeptide is Large ribosomal subunit protein uL4 (Thermobifida fusca (strain YX)).